The sequence spans 460 residues: MPLPQVAIVGRPNVGKSTLFNRLLRQRRAIVEEVPGTTRDRIYGIVEWNDLRFGLFDTGGLLTEEEIERSSERELVEATKAQAELAIAEADLVIFVVDASAGPTAGDWEVADFLRRTDKPILLVANKAESREREFNALQFYELGLGDPIPVSALHGRGIADLLDAIAERLPRREEDGTAEAEAPKIAIVGRPNVGKSALLNAILGQPRQIVSPIPGTTRDAVDTELVWKGQPIVLIDTAGIRRPGRIERGIERYSILRAERAIERSDVAILVVDATEPFTHQDQAVAGKVLDAKKGIVVAINKWDLFEHMEGEGAREAFEEDAREAFHFMPWAPLVFVSALTGKNVEHVVDLALVVVAERSRRIPTAELNQLLREAIAHHPPPTRPGKWVKFYYVTQPEVNPPTFVFFCNRPQLVHFSYKRYLENRIRERYGFLGTPIELVFRERERSAPAWERGKAGRS.

EngA-type G domains are found at residues 4–174 and 184–361; these read PQVA…PRRE and PKIA…AERS. Residues 10-17, 57-61, 126-129, 190-197, 237-241, and 302-305 each bind GTP; these read GRPNVGKS, DTGGL, NKAE, DTAGI, and NKWD. One can recognise a KH-like domain in the interval 362-446; it reads RRIPTAELNQ…PIELVFRERE (85 aa).

Belongs to the TRAFAC class TrmE-Era-EngA-EngB-Septin-like GTPase superfamily. EngA (Der) GTPase family. Associates with the 50S ribosomal subunit.

GTPase that plays an essential role in the late steps of ribosome biogenesis. This is GTPase Der from Thermomicrobium roseum (strain ATCC 27502 / DSM 5159 / P-2).